Reading from the N-terminus, the 488-residue chain is Serine/threonine-protein kinase haspin homolog hrk1 (488 aa).

The 333-residue stretch at 156–488 folds into the Protein kinase domain; sequence TFEIQKIGEA…SLLNWVRQKY (333 aa). ATP-binding positions include 162-170 and K184; that span reads IGEASYSEV. D305 functions as the Proton acceptor in the catalytic mechanism.

It belongs to the protein kinase superfamily. Ser/Thr protein kinase family. Haspin subfamily. As to quaternary structure, interacts with pds5 and swi6.

It localises to the cytoplasm. Its subcellular location is the chromosome. It carries out the reaction L-seryl-[protein] + ATP = O-phospho-L-seryl-[protein] + ADP + H(+). It catalyses the reaction L-threonyl-[protein] + ATP = O-phospho-L-threonyl-[protein] + ADP + H(+). Functionally, serine/threonine haspin-like protein kinase involved in cell cycle regulation. Acts in chromosomal passenger complex (CPC) targeting to centromeres by phosphorylating histone H3 at 'Thr3' (H3T3ph). This Schizosaccharomyces pombe (strain 972 / ATCC 24843) (Fission yeast) protein is Serine/threonine-protein kinase haspin homolog hrk1 (hrk1).